We begin with the raw amino-acid sequence, 322 residues long: tRNA uridine(34) hydroxylase (322 aa).

A Rhodanese domain is found at 126 to 220 (LAEDTVVIDA…YGKDPEVKGE (95 aa)). Catalysis depends on cysteine 180, which acts as the Cysteine persulfide intermediate.

This sequence belongs to the TrhO family.

It catalyses the reaction uridine(34) in tRNA + AH2 + O2 = 5-hydroxyuridine(34) in tRNA + A + H2O. In terms of biological role, catalyzes oxygen-dependent 5-hydroxyuridine (ho5U) modification at position 34 in tRNAs. This chain is tRNA uridine(34) hydroxylase, found in Shouchella clausii (strain KSM-K16) (Alkalihalobacillus clausii).